A 154-amino-acid polypeptide reads, in one-letter code: 6,7-dimethyl-8-ribityllumazine synthase (154 aa).

Residues Phe22, 56 to 58 (AFE), and 80 to 82 (AVI) contribute to the 5-amino-6-(D-ribitylamino)uracil site. 85–86 (ST) is a binding site for (2S)-2-hydroxy-3-oxobutyl phosphate. Residue His88 is the Proton donor of the active site. Position 113 (Phe113) interacts with 5-amino-6-(D-ribitylamino)uracil. Arg127 is a binding site for (2S)-2-hydroxy-3-oxobutyl phosphate.

The protein belongs to the DMRL synthase family.

It carries out the reaction (2S)-2-hydroxy-3-oxobutyl phosphate + 5-amino-6-(D-ribitylamino)uracil = 6,7-dimethyl-8-(1-D-ribityl)lumazine + phosphate + 2 H2O + H(+). It participates in cofactor biosynthesis; riboflavin biosynthesis; riboflavin from 2-hydroxy-3-oxobutyl phosphate and 5-amino-6-(D-ribitylamino)uracil: step 1/2. Its function is as follows. Catalyzes the formation of 6,7-dimethyl-8-ribityllumazine by condensation of 5-amino-6-(D-ribitylamino)uracil with 3,4-dihydroxy-2-butanone 4-phosphate. This is the penultimate step in the biosynthesis of riboflavin. The chain is 6,7-dimethyl-8-ribityllumazine synthase from Clostridium beijerinckii (strain ATCC 51743 / NCIMB 8052) (Clostridium acetobutylicum).